A 24-amino-acid chain; its full sequence is MNGRPSVFTSQDYLSDHLWRALNA.

It belongs to the arginine attenuator peptide family.

Its function is as follows. Arginine attenuator peptide (AAP) that has a regulatory role in the production of arginine-specific carbamoyl phosphate synthetase. Encoded by an upstream open reading frame (uORF) within the 5'-leader region of arginine-specific carbamoyl phosphate synthetase small chain (arg-2) mRNA, it attenuates the translation of the downstream arg-2 ORF. In the presence of high concentrations of arginine, ribosomes translating the uORF encoding AAP stall at the termination codon, resulting in reduced translation from the downstream arg-2 initiation codon. The polypeptide is Arginine attenuator peptide (Neurospora crassa (strain ATCC 24698 / 74-OR23-1A / CBS 708.71 / DSM 1257 / FGSC 987)).